The chain runs to 417 residues: C4-dicarboxylate transport protein (417 aa).

8 helical membrane-spanning segments follow: residues 4–26 (IYVQVLIAIVLGVLVGAIWPQIG), 41–60 (KLVIAPVIFCTVAGGIARMG), 72–94 (ALIYFEVVSTLALVIGLVVGRLI), 137–159 (FIGAFADGNLLQVLVIAILTGFA), 180–202 (LFFGIIHIVVRLAPIGAFGAMGF), 217–239 (ALVATFYVTSLLFVLVVLGGIAW), 285–307 (VVGLVIPTGYSFNLDGTNIYMTL), and 347–369 (FITLAATLAVVPDIPIAALAILV).

It belongs to the dicarboxylate/amino acid:cation symporter (DAACS) (TC 2.A.23) family.

The protein localises to the cell inner membrane. Responsible for the transport of dicarboxylates such as succinate, fumarate, and malate from the periplasm across the membrane. This is C4-dicarboxylate transport protein from Caulobacter vibrioides (strain ATCC 19089 / CIP 103742 / CB 15) (Caulobacter crescentus).